Reading from the N-terminus, the 371-residue chain is tRNA-specific 2-thiouridylase MnmA (371 aa).

ATP contacts are provided by residues 13 to 20 and Met39; that span reads GMSGGVDS. An interaction with target base in tRNA region spans residues 99–101; it reads NPD. Cys104 serves as the catalytic Nucleophile. A disulfide bridge links Cys104 with Cys200. Gly128 is an ATP binding site. The segment at 150–152 is interaction with tRNA; that stretch reads KDQ. Residue Cys200 is the Cysteine persulfide intermediate of the active site. The interaction with tRNA stretch occupies residues 308–309; it reads RY.

It belongs to the MnmA/TRMU family.

The protein localises to the cytoplasm. It catalyses the reaction S-sulfanyl-L-cysteinyl-[protein] + uridine(34) in tRNA + AH2 + ATP = 2-thiouridine(34) in tRNA + L-cysteinyl-[protein] + A + AMP + diphosphate + H(+). In terms of biological role, catalyzes the 2-thiolation of uridine at the wobble position (U34) of tRNA, leading to the formation of s(2)U34. This chain is tRNA-specific 2-thiouridylase MnmA, found in Listeria monocytogenes serotype 4a (strain HCC23).